A 213-amino-acid chain; its full sequence is LIM domain-containing protein PLIM2c (213 aa).

2 consecutive LIM zinc-binding domains span residues aspartate 9–glutamate 69 and aspartate 105–glutamate 165. The interval alanine 177 to serine 213 is disordered. Basic and acidic residues predominate over residues serine 182–glutamate 195.

As to quaternary structure, interacts with F-actin. As to expression, exclusively expressed in pollen grains.

It is found in the cytoplasm. The protein localises to the cytoskeleton. In terms of biological role, binds to actin filaments and promotes cross-linking into thick bundles. Has an actin-stabilizing activity. Associates predominantly with long and dynamic actin bundles in the shank of growing pollen tubes. The actin regulatory activities are inhibited by pH &gt; 6.8 and/or high [Ca(2+)]. The chain is LIM domain-containing protein PLIM2c from Arabidopsis thaliana (Mouse-ear cress).